Consider the following 343-residue polypeptide: 3-isopropylmalate dehydrogenase (343 aa).

Substrate-binding residues include Arg94, Arg104, Arg128, and Asp218. Asp218, Asp242, and Asp246 together coordinate Mg(2+). Position 278–290 (278–290 (GSAPDIAGQNKAN)) interacts with NAD(+).

Belongs to the isocitrate and isopropylmalate dehydrogenases family. LeuB type 2 subfamily. Homodimer. It depends on Mg(2+) as a cofactor. The cofactor is Mn(2+).

It localises to the cytoplasm. The enzyme catalyses (2R,3S)-3-isopropylmalate + NAD(+) = 4-methyl-2-oxopentanoate + CO2 + NADH. Its pathway is amino-acid biosynthesis; L-leucine biosynthesis; L-leucine from 3-methyl-2-oxobutanoate: step 3/4. Its function is as follows. Catalyzes the oxidation of 3-carboxy-2-hydroxy-4-methylpentanoate (3-isopropylmalate) to 3-carboxy-4-methyl-2-oxopentanoate. The product decarboxylates to 4-methyl-2 oxopentanoate. The chain is 3-isopropylmalate dehydrogenase from Bifidobacterium longum subsp. infantis (strain ATCC 15697 / DSM 20088 / JCM 1222 / NCTC 11817 / S12).